Reading from the N-terminus, the 229-residue chain is Predicted GPI-anchored protein 19 (229 aa).

An N-terminal signal peptide occupies residues 1–20 (MFSTTSIVLWFTILLPVTLP). The interval 63–92 (DNEQVLRKSKKKKKTTSTGTPGNENTTDFA) is disordered. Residues 81–92 (GTPGNENTTDFA) show a composition bias toward polar residues. N-linked (GlcNAc...) asparagine glycans are attached at residues Asn-87, Asn-184, and Asn-189. The GPI-anchor amidated glycine moiety is linked to residue Gly-208. A propeptide spans 209-229 (FGSLIPYNSFYLYILLFCIIF) (removed in mature form).

It localises to the cell membrane. Functionally, predicted GPI-anchored protein which may have a role during host infection. This is Predicted GPI-anchored protein 19 (PGA19) from Candida albicans (strain SC5314 / ATCC MYA-2876) (Yeast).